We begin with the raw amino-acid sequence, 593 residues long: Proteasome-associated ATPase (593 aa).

Residues 23-95 adopt a coiled-coil conformation; sequence LLSQISYLEE…LKEEVDRLGQ (73 aa). 282-287 is a binding site for ATP; it reads GCGKTL. The docks into pockets in the proteasome alpha-ring stretch occupies residues 592-593; sequence YL.

Belongs to the AAA ATPase family. In terms of assembly, homohexamer. Assembles into a hexameric ring structure that caps the 20S proteasome core. Strongly interacts with the prokaryotic ubiquitin-like protein Pup through a hydrophobic interface; the interacting region of ARC lies in its N-terminal coiled-coil domain. There is one Pup binding site per ARC hexamer ring. Upon ATP-binding, the C-terminus of ARC interacts with the alpha-rings of the proteasome core, possibly by binding to the intersubunit pockets.

The protein operates within protein degradation; proteasomal Pup-dependent pathway. ATPase which is responsible for recognizing, binding, unfolding and translocation of pupylated proteins into the bacterial 20S proteasome core particle. May be essential for opening the gate of the 20S proteasome via an interaction with its C-terminus, thereby allowing substrate entry and access to the site of proteolysis. Thus, the C-termini of the proteasomal ATPase may function like a 'key in a lock' to induce gate opening and therefore regulate proteolysis. This is Proteasome-associated ATPase from Geodermatophilus obscurus (strain ATCC 25078 / DSM 43160 / JCM 3152 / CCUG 61914 / KCC A-0152 / KCTC 9177 / NBRC 13315 / NRRL B-3577 / G-20).